A 116-amino-acid polypeptide reads, in one-letter code: MARIAGVDLPRDKRIVVALTYIYGIGDATAKKICADAGVSEDIRSKDLTPEDQEKLRAEVDKYRVEGDLRREVSMNIKRLVDIGSYRGIRHRRGLPVRGQNTKNNARTRKGTKRNR.

Residues 92–116 (RRGLPVRGQNTKNNARTRKGTKRNR) form a disordered region. Positions 106–116 (ARTRKGTKRNR) are enriched in basic residues.

This sequence belongs to the universal ribosomal protein uS13 family. In terms of assembly, part of the 30S ribosomal subunit. Forms a loose heterodimer with protein S19. Forms two bridges to the 50S subunit in the 70S ribosome.

Functionally, located at the top of the head of the 30S subunit, it contacts several helices of the 16S rRNA. In the 70S ribosome it contacts the 23S rRNA (bridge B1a) and protein L5 of the 50S subunit (bridge B1b), connecting the 2 subunits; these bridges are implicated in subunit movement. Contacts the tRNAs in the A and P-sites. This chain is Small ribosomal subunit protein uS13, found in Lactobacillus acidophilus (strain ATCC 700396 / NCK56 / N2 / NCFM).